Here is a 185-residue protein sequence, read N- to C-terminus: Ribosome-recycling factor (185 aa).

Belongs to the RRF family.

The protein localises to the cytoplasm. Its function is as follows. Responsible for the release of ribosomes from messenger RNA at the termination of protein biosynthesis. May increase the efficiency of translation by recycling ribosomes from one round of translation to another. The polypeptide is Ribosome-recycling factor (Kineococcus radiotolerans (strain ATCC BAA-149 / DSM 14245 / SRS30216)).